Here is a 123-residue protein sequence, read N- to C-terminus: Small ribosomal subunit protein uS12 (123 aa).

A 3-methylthioaspartic acid modification is found at Asp89. Residues Gly100–Lys123 form a disordered region. Basic residues predominate over residues Gly113–Lys123.

Belongs to the universal ribosomal protein uS12 family. Part of the 30S ribosomal subunit. Contacts proteins S8 and S17. May interact with IF1 in the 30S initiation complex.

Functionally, with S4 and S5 plays an important role in translational accuracy. Interacts with and stabilizes bases of the 16S rRNA that are involved in tRNA selection in the A site and with the mRNA backbone. Located at the interface of the 30S and 50S subunits, it traverses the body of the 30S subunit contacting proteins on the other side and probably holding the rRNA structure together. The combined cluster of proteins S8, S12 and S17 appears to hold together the shoulder and platform of the 30S subunit. In Pseudomonas aeruginosa (strain LESB58), this protein is Small ribosomal subunit protein uS12.